The sequence spans 316 residues: MAEVKVKVQPPDADPVEIENRIIELCHQFPHGITDQVIQNEMPHIEAQQRAVAINRLLSMGQLDLLRSNTGLLYRIKDSQNAGKMKGSDNQEKLVYQIIEDAGNKGIWSRDIRYKSNLPLTEINKILKNLESKKLIKAVKSVAASKKKVYMLYNLQPDRSVTGGAWYSDQDFESEFVEVLNQQCFKFLQSKAETARESKQNPMIQRNSSFASSHEVWKYICELGISKVELSMEDIETILNTLIYDGKVEMTIIAAKEGTVGSVDGHMKLYRAVNPIIPPTGLVRAPCGLCPVFDDCHEGGEISPSNCIYMTEWLEF.

Position 2 is an N-acetylalanine (Ala2). Glycyl lysine isopeptide (Lys-Gly) (interchain with G-Cter in SUMO2) cross-links involve residues Lys5 and Lys7. Residues Cys287, Cys290, Cys296, and Cys307 each contribute to the [4Fe-4S] cluster site.

Belongs to the eukaryotic RPC34/RPC39 RNA polymerase subunit family. In terms of assembly, component of the RNA polymerase III complex consisting of 17 subunits: a ten-subunit horseshoe-shaped catalytic core composed of POLR3A/RPC1, POLR3B/RPC2, POLR1C/RPAC1, POLR1D/RPAC2, POLR3K/RPC10, POLR2E/RPABC1, POLR2F/RPABC2, POLR2H/RPABC3, POLR2K/RPABC4 and POLR2L/RPABC5; a mobile stalk composed of two subunits POLR3H/RPC8 and CRCP/RPC9, protruding from the core and functioning primarily in transcription initiation; and additional subunits homologous to general transcription factors of the RNA polymerase II machinery, POLR3C/RPC3-POLR3F/RPC6-POLR3G/RPC7 heterotrimer required for transcription initiation and POLR3D/RPC4-POLR3E/RPC5 heterodimer involved in both transcription initiation and termination. Directly interacts with POLR3C. Interacts with TBP and TFIIIB90 and GTF3C4. Interacts with MAF1. As part of the RNA polymerase III complex, interacts with PKP2.

The protein resides in the nucleus. In terms of biological role, DNA-dependent RNA polymerase catalyzes the transcription of DNA into RNA using the four ribonucleoside triphosphates as substrates. Specific peripheric component of RNA polymerase III (Pol III) which synthesizes small non-coding RNAs including 5S rRNA, snRNAs, tRNAs and miRNAs from at least 500 distinct genomic loci. Part of POLR3C/RPC3-POLR3F/RPC6-POLR3G/RPC7 heterotrimer that coordinates the dynamics of Pol III stalk and clamp modules during the transition from apo to elongation state. Pol III plays a key role in sensing and limiting infection by intracellular bacteria and DNA viruses, including varicella zoster virus. Acts as a nuclear and cytosolic DNA sensor detecting AT-rich DNA, involved in innate immune response. Can sense non-self dsDNA that serves as template for transcription into dsRNA. The non-self RNA polymerase III transcripts, such as Epstein-Barr virus-encoded RNAs (EBERs) induce type I interferon and NF-kappa-B through the RIG-I pathway. Preferentially binds double-stranded DNA (dsDNA). This chain is DNA-directed RNA polymerase III subunit RPC6, found in Homo sapiens (Human).